The sequence spans 1342 residues: DNA-directed RNA polymerase subunit beta (1342 aa).

This sequence belongs to the RNA polymerase beta chain family. In terms of assembly, the RNAP catalytic core consists of 2 alpha, 1 beta, 1 beta' and 1 omega subunit. When a sigma factor is associated with the core the holoenzyme is formed, which can initiate transcription.

The enzyme catalyses RNA(n) + a ribonucleoside 5'-triphosphate = RNA(n+1) + diphosphate. DNA-dependent RNA polymerase catalyzes the transcription of DNA into RNA using the four ribonucleoside triphosphates as substrates. The chain is DNA-directed RNA polymerase subunit beta from Erwinia tasmaniensis (strain DSM 17950 / CFBP 7177 / CIP 109463 / NCPPB 4357 / Et1/99).